A 363-amino-acid polypeptide reads, in one-letter code: Sulfate/thiosulfate import ATP-binding protein CysA (363 aa).

In terms of domain architecture, ABC transporter spans 3–237 (IEINNISKYF…PATRFVLEFL (235 aa)). 35-42 (GPSGSGKT) lines the ATP pocket.

It belongs to the ABC transporter superfamily. Sulfate/tungstate importer (TC 3.A.1.6) family. As to quaternary structure, the complex is composed of two ATP-binding proteins (CysA), two transmembrane proteins (CysT and CysW) and a solute-binding protein (CysP).

The protein localises to the cell inner membrane. It carries out the reaction sulfate(out) + ATP + H2O = sulfate(in) + ADP + phosphate + H(+). The enzyme catalyses thiosulfate(out) + ATP + H2O = thiosulfate(in) + ADP + phosphate + H(+). Part of the ABC transporter complex CysAWTP involved in sulfate/thiosulfate import. Responsible for energy coupling to the transport system. The polypeptide is Sulfate/thiosulfate import ATP-binding protein CysA (Yersinia pestis).